The chain runs to 509 residues: Cytochrome P450 monooxygenase cpaH (509 aa).

An N-linked (GlcNAc...) asparagine glycan is attached at Asn15. A helical membrane pass occupies residues 31–51 (TTILLIGVTYCILVGIYRVTL). N-linked (GlcNAc...) asparagine glycosylation is found at Asn306 and Asn412. Cys453 serves as a coordination point for heme.

The protein belongs to the cytochrome P450 family. Heme serves as cofactor.

The protein resides in the membrane. The protein operates within secondary metabolite biosynthesis. Functionally, cytochrome P450 monooxygenase; part of the gene cluster that mediates the biosynthesis of the fungal neurotoxin cyclopiazonic acid (CPA), a nanomolar inhibitor of Ca(2+)-ATPase with a unique pentacyclic indole tetramic acid scaffold. The hybrid two module polyketide synthase-nonribosomal peptide synthetase (PKS-NRPS) cpaS incorporates acetyl-CoA, malonyl-CoA, and tryptophan (Trp) and utilizes a C-terminal redox-incompetent reductase domain to make and release the tryptophan tetramic acid, cyclo-acetoacetyl-L-tryptophan (c-AATrp), as the first intermediate in the pathway. CpaS catalyzes a Dieckmann-type cyclization on the N-acetoacetyl-Trp intermediate bound in thioester linkage to the phosphopantetheinyl arm of the T domain to form and release c-AATrp. CpaD then regiospecifically dimethylallylates c-AATrp to form beta-cyclopiazonic acid. CpaD discriminates against free Trp but accepts tryptophan-containing thiohydantoins, diketopiperazines, and linear peptides as substrates for C4-prenylation and also acts as a regiospecific O-dimethylallyltransferase (DMAT) on a tyrosine-derived tetramic acid. The beta-cyclopiazonate dehydrogenase cpaO then carries out the dehydrogenation of beta-CPA to yield an unstable enimine product, which is captured by intramolecular cyclization to create the pentacyclic fused scaffold of alpha-cyclopiazonate. Finally, the cytochrome P450 monooxygenase cpaH mediates the conversion of CPA into the less toxic 2-oxocyclopiazonic acid, the end product of the CPA pathway in A.oryza. The chain is Cytochrome P450 monooxygenase cpaH from Aspergillus oryzae (Yellow koji mold).